A 264-amino-acid chain; its full sequence is Small ribosomal subunit protein uS2 (264 aa).

The interval 222–246 (GRSENKDEQNEQGEQIAPVTNEEKQ) is disordered.

This sequence belongs to the universal ribosomal protein uS2 family.

This chain is Small ribosomal subunit protein uS2, found in Helicobacter hepaticus (strain ATCC 51449 / 3B1).